The following is a 448-amino-acid chain: Squalene synthase ERG9 (448 aa).

The helical transmembrane segment at 420–440 (RIEPGNFNCNVVLFGIGALIL) threads the bilayer.

Belongs to the phytoene/squalene synthase family. It depends on Mg(2+) as a cofactor.

Its subcellular location is the endoplasmic reticulum membrane. The protein resides in the microsome. It carries out the reaction 2 (2E,6E)-farnesyl diphosphate + NADPH + H(+) = squalene + 2 diphosphate + NADP(+). The catalysed reaction is 2 (2E,6E)-farnesyl diphosphate + NADH + H(+) = squalene + 2 diphosphate + NAD(+). Its pathway is terpene metabolism; lanosterol biosynthesis; lanosterol from farnesyl diphosphate: step 1/3. In terms of biological role, squalene synthase; part of the third module of ergosterol biosynthesis pathway that includes the late steps of the pathway. ERG9 produces squalene from 2 farnesyl pyrophosphate moieties. The third module or late pathway involves the ergosterol synthesis itself through consecutive reactions that mainly occur in the endoplasmic reticulum (ER) membrane. Firstly, the squalene synthase ERG9 catalyzes the condensation of 2 farnesyl pyrophosphate moieties to form squalene, which is the precursor of all steroids. Squalene synthase is crucial for balancing the incorporation of farnesyl diphosphate (FPP) into sterol and nonsterol isoprene synthesis. Secondly, the squalene epoxidase ERG1 catalyzes the stereospecific oxidation of squalene to (S)-2,3-epoxysqualene, which is considered to be a rate-limiting enzyme in steroid biosynthesis. Then, the lanosterol synthase ERG7 catalyzes the cyclization of (S)-2,3 oxidosqualene to lanosterol, a reaction that forms the sterol core. In the next steps, lanosterol is transformed to zymosterol through a complex process involving various demethylation, reduction and desaturation reactions. The lanosterol 14-alpha-demethylase ERG11 (also known as CYP51) catalyzes C14-demethylation of lanosterol to produce 4,4'-dimethyl cholesta-8,14,24-triene-3-beta-ol, which is critical for ergosterol biosynthesis. The C-14 reductase ERG24 reduces the C14=C15 double bond of 4,4-dimethyl-cholesta-8,14,24-trienol to produce 4,4-dimethyl-cholesta-8,24-dienol. 4,4-dimethyl-cholesta-8,24-dienol is substrate of the C-4 demethylation complex ERG25-ERG26-ERG27 in which ERG25 catalyzes the three-step monooxygenation required for the demethylation of 4,4-dimethyl and 4alpha-methylsterols, ERG26 catalyzes the oxidative decarboxylation that results in a reduction of the 3-beta-hydroxy group at the C-3 carbon to an oxo group, and ERG27 is responsible for the reduction of the keto group on the C-3. ERG28 has a role as a scaffold to help anchor ERG25, ERG26 and ERG27 to the endoplasmic reticulum and ERG29 regulates the activity of the iron-containing C4-methylsterol oxidase ERG25. Then, the sterol 24-C-methyltransferase ERG6 catalyzes the methyl transfer from S-adenosyl-methionine to the C-24 of zymosterol to form fecosterol. The C-8 sterol isomerase ERG2 catalyzes the reaction which results in unsaturation at C-7 in the B ring of sterols and thus converts fecosterol to episterol. The sterol-C5-desaturase ERG3 then catalyzes the introduction of a C-5 double bond in the B ring to produce 5-dehydroepisterol. The C-22 sterol desaturase ERG5 further converts 5-dehydroepisterol into ergosta-5,7,22,24(28)-tetraen-3beta-ol by forming the C-22(23) double bond in the sterol side chain. Finally, ergosta-5,7,22,24(28)-tetraen-3beta-ol is substrate of the C-24(28) sterol reductase ERG4 to produce ergosterol. This chain is Squalene synthase ERG9, found in Candida albicans (Yeast).